The primary structure comprises 539 residues: GMP synthase [glutamine-hydrolyzing] (539 aa).

One can recognise a Glutamine amidotransferase type-1 domain in the interval 4 to 202; the sequence is KILILDFGSQ…VLDIAGAKPD (199 aa). The Nucleophile role is filled by Cys81. Active-site residues include His176 and Glu178. The region spanning 203-395 is the GMPS ATP-PPase domain; that stretch reads WIMRDHIEEA…LGLPAEMVYR (193 aa). 230-236 is an ATP binding site; the sequence is SGGVDSS.

As to quaternary structure, homodimer.

The catalysed reaction is XMP + L-glutamine + ATP + H2O = GMP + L-glutamate + AMP + diphosphate + 2 H(+). It functions in the pathway purine metabolism; GMP biosynthesis; GMP from XMP (L-Gln route): step 1/1. Functionally, catalyzes the synthesis of GMP from XMP. The sequence is that of GMP synthase [glutamine-hydrolyzing] from Burkholderia pseudomallei (strain 1106a).